The sequence spans 297 residues: Vacuolar protein sorting-associated protein 26C (297 aa).

This sequence belongs to the VPS26 family. As to quaternary structure, component of the commander complex that is essential for endosomal recycling of transmembrane cargos; the commander complex is composed of the CCC subcomplex and the retriever subcomplex. Component of the heterotrimeric retriever complex consisting of VPS26C, VPS29 and VPS35L; within the complex interacts with VPS35L. Interacts with SNX17 (via C-terminus); the interaction is direct and associates SNX17 with the retriever complex. Interacts with SNX31; the interaction is direct.

The protein localises to the endosome. Functionally, component of the commander complex that is essential for endosomal recycling of transmembrane cargos; the commander complex is composed of the CCC subcomplex and the retriever subcomplex. Component of the retriever complex, which is a heterotrimeric complex related to retromer cargo-selective complex (CSC) and essential for retromer-independent retrieval and recycling of numerous cargos such as integrin alpha-5/beta-1 (ITGA5:ITGB1). The recruitment of the retriever complex to the endosomal membrane involves CCC and WASH complexes. In the endosomes, drives the retriever and recycling of NxxY-motif-containing cargo proteins by coupling to SNX17, a cargo essential for the homeostatic maintenance of numerous cell surface proteins associated with processes that include cell migration, cell adhesion, nutrient supply and cell signaling. The chain is Vacuolar protein sorting-associated protein 26C from Mus musculus (Mouse).